Consider the following 483-residue polypeptide: UDP-N-acetylmuramate--L-alanine ligase (483 aa).

125-131 (GTHGKTT) contacts ATP.

The protein belongs to the MurCDEF family.

The protein resides in the cytoplasm. It catalyses the reaction UDP-N-acetyl-alpha-D-muramate + L-alanine + ATP = UDP-N-acetyl-alpha-D-muramoyl-L-alanine + ADP + phosphate + H(+). It functions in the pathway cell wall biogenesis; peptidoglycan biosynthesis. Cell wall formation. The protein is UDP-N-acetylmuramate--L-alanine ligase of Pseudoalteromonas translucida (strain TAC 125).